We begin with the raw amino-acid sequence, 341 residues long: HTH-type transcriptional repressor PurR (341 aa).

The 55-residue stretch at 2 to 56 folds into the HTH lacI-type domain; the sequence is ATIKDVAKRANVSTTTVSHVINKTRFVAEETRNAVWAAIKELHYSPSAVARSLKV. Residues 4 to 23 constitute a DNA-binding region (H-T-H motif); that stretch reads IKDVAKRANVSTTTVSHVIN. Residues 48–56 mediate DNA binding; the sequence is SAVARSLKV. Residues tyrosine 73, arginine 190, threonine 192, phenylalanine 221, and aspartate 275 each contribute to the hypoxanthine site.

In terms of assembly, homodimer.

The protein operates within purine metabolism; purine nucleotide biosynthesis [regulation]. Functionally, is the main repressor of the genes involved in the de novo synthesis of purine nucleotides, regulating purB, purC, purEK, purF, purHD, purL, purMN and guaBA expression. PurR is allosterically activated to bind its cognate DNA by binding the purine corepressors, hypoxanthine or guanine, thereby effecting transcription repression. The sequence is that of HTH-type transcriptional repressor PurR from Salmonella typhi.